The primary structure comprises 2276 residues: Protein Ycf2 (2276 aa).

Position 1621–1628 (Gly-1621–Ser-1628) interacts with ATP.

It belongs to the Ycf2 family.

It is found in the plastid. Its subcellular location is the chloroplast stroma. Probable ATPase of unknown function. Its presence in a non-photosynthetic plant (Epifagus virginiana) and experiments in tobacco indicate that it has an essential function which is probably not related to photosynthesis. This is Protein Ycf2 from Guizotia abyssinica (Niger).